The following is a 392-amino-acid chain: Phosphoglycerate kinase (392 aa).

Substrate is bound by residues 21-23 (DFN), Arg-36, 59-62 (HLGR), Arg-118, and Arg-151. ATP-binding positions include Lys-201, Gly-292, Glu-323, and 349–352 (GGDS).

Belongs to the phosphoglycerate kinase family. Monomer.

Its subcellular location is the cytoplasm. The enzyme catalyses (2R)-3-phosphoglycerate + ATP = (2R)-3-phospho-glyceroyl phosphate + ADP. Its pathway is carbohydrate degradation; glycolysis; pyruvate from D-glyceraldehyde 3-phosphate: step 2/5. The sequence is that of Phosphoglycerate kinase from Borrelia turicatae (strain 91E135).